A 317-amino-acid chain; its full sequence is GTPase Era (317 aa).

In terms of domain architecture, Era-type G spans 17–190 (RAGFACFVGR…ADLLTPLLPE (174 aa)). The segment at 25-32 (GRPNAGKS) is G1. 25 to 32 (GRPNAGKS) contacts GTP. The G2 stretch occupies residues 51–55 (QTTRH). Residues 72–75 (DTPG) form a G3 region. GTP is bound by residues 72–76 (DTPGL) and 135–138 (TKTD). A G4 region spans residues 135 to 138 (TKTD). Residues 169–171 (VSA) form a G5 region. The region spanning 221–303 (VRDELPHSIA…FLDLHVKVAK (83 aa)) is the KH type-2 domain.

It belongs to the TRAFAC class TrmE-Era-EngA-EngB-Septin-like GTPase superfamily. Era GTPase family. As to quaternary structure, monomer.

It is found in the cytoplasm. The protein resides in the cell membrane. In terms of biological role, an essential GTPase that binds both GDP and GTP, with rapid nucleotide exchange. Plays a role in 16S rRNA processing and 30S ribosomal subunit biogenesis and possibly also in cell cycle regulation and energy metabolism. The polypeptide is GTPase Era (Streptomyces coelicolor (strain ATCC BAA-471 / A3(2) / M145)).